The sequence spans 675 residues: Alpha-1,4-glucan:maltose-1-phosphate maltosyltransferase (675 aa).

Residues Lys256, Gln316, and Asp351 each contribute to the alpha-maltose 1-phosphate site. The active-site Nucleophile is the Asp386. Asn387 serves as a coordination point for alpha-maltose 1-phosphate. The active-site Proton donor is Glu415. 525–526 (KY) contributes to the alpha-maltose 1-phosphate binding site.

This sequence belongs to the glycosyl hydrolase 13 family. GlgE subfamily. In terms of assembly, homodimer.

It carries out the reaction alpha-maltose 1-phosphate + [(1-&gt;4)-alpha-D-glucosyl](n) = [(1-&gt;4)-alpha-D-glucosyl](n+2) + phosphate. Functionally, maltosyltransferase that uses maltose 1-phosphate (M1P) as the sugar donor to elongate linear or branched alpha-(1-&gt;4)-glucans. Is involved in a branched alpha-glucan biosynthetic pathway from trehalose, together with TreS, Mak and GlgB. In Corynebacterium glutamicum (strain ATCC 13032 / DSM 20300 / JCM 1318 / BCRC 11384 / CCUG 27702 / LMG 3730 / NBRC 12168 / NCIMB 10025 / NRRL B-2784 / 534), this protein is Alpha-1,4-glucan:maltose-1-phosphate maltosyltransferase.